The chain runs to 158 residues: Small ribosomal subunit protein uS7 (158 aa).

It belongs to the universal ribosomal protein uS7 family. In terms of assembly, part of the 30S ribosomal subunit. Contacts proteins S9 and S11.

Its function is as follows. One of the primary rRNA binding proteins, it binds directly to 16S rRNA where it nucleates assembly of the head domain of the 30S subunit. Is located at the subunit interface close to the decoding center, probably blocks exit of the E-site tRNA. The polypeptide is Small ribosomal subunit protein uS7 (Phocaeicola vulgatus (strain ATCC 8482 / DSM 1447 / JCM 5826 / CCUG 4940 / NBRC 14291 / NCTC 11154) (Bacteroides vulgatus)).